Here is a 289-residue protein sequence, read N- to C-terminus: MRVLVNKHVFMQPQPGHYAHTRMSMLLLKPKTKDLLSHRLDDVFRSASREADALAAARYREPERGAPTGFNLAFNTDKNFWEYITNDDPQRGERFARAMHAVNINSLDVIPRLYPFDSLVVDGGLIVDVGGGQGQVAKRILEYFPSSGLRCIVQDRYVVNASSPGPAVVEMQQHDFFEAQPVKGAAAYFFRHIFHDWPDKACAAILKQTARAMDKDRSRILICDQVLQDDVPAEASLLYDIDMMSLFGGKERSLAEWKYLIASAEESLHIVNVIFSTESEAAILDVRIK.

Asp155 provides a ligand contact to S-adenosyl-L-methionine. The active-site Proton acceptor is His195.

The protein belongs to the class I-like SAM-binding methyltransferase superfamily. Cation-independent O-methyltransferase family.

Its pathway is secondary metabolite biosynthesis. It functions in the pathway alkaloid biosynthesis. It participates in mycotoxin biosynthesis. Functionally, O-methyltransferase; part of the gene cluster that mediates the biosynthesis of the aspoquinolone mycotoxins. The role of asqN within the aspoquinolone pathway has still to be determined. The first step of the pathway is catalyzed by the nonribosomal peptide synthetase asqK that condenses anthranilic acid and O-methyl-L-tyrosine to produce 4'-methoxycyclopeptin. 4'-methoxycyclopeptin is then converted to 4'-methoxydehydrocyclopeptin by the ketoglutarate-dependent dioxygenase asqJ. AsqJ also converts its first product 4'-methoxydehydrocyclopeptin to 4'-methoxycyclopenin. The following conversion of 4'-methoxycyclopenin into 4'-methoxyviridicatin is catalyzed by the cyclopenase asqI. 4'-methoxyviridicatin is the precursor of quinolone natural products, and is further converted to quinolinone B. The prenyltransferase asqH1 then catalyzes the canonical Friedel-Crafts alkylation of quinolinone B with dimethylallyl cation to yield dimethylallyl quinolone, which is subjected to FAD-dependent dehydrogenation by the FAD-linked oxidoreductase asqF to yield conjugated aryl diene. The delta(3') double bond then serves as the site of the second alkylation with DMAPP catalyzed by the prenyltransferase asqH2 to yield a carbenium ion intermediate, which can be attacked by H(2)O to yield a styrenyl quinolone containing a C3'-hydroxyprenyl chain. The FAD-dependent monooxygenase asqG performs epoxidation of the terminal C7'-C8' olefin. Finally, after dehydratation of the epoxide at C3 by asqC, the quinolone epoxide rearrangement protein asqO catalyzes an enzymatic 3-exo-tet cyclization to yield the cyclopropyl-THF ring system in aspoquinolone. This Emericella nidulans (strain FGSC A4 / ATCC 38163 / CBS 112.46 / NRRL 194 / M139) (Aspergillus nidulans) protein is O-methyltransferase asqN.